We begin with the raw amino-acid sequence, 199 residues long: CASP-like protein 1D2 (199 aa).

The tract at residues 1 to 27 (MASTENPDPETGKSEPIPASATPPPSS) is disordered. N-acetylalanine is present on Ala-2. The Cytoplasmic portion of the chain corresponds to 2-36 (ASTENPDPETGKSEPIPASATPPPSSAASFLDCRK). Residues 37–57 (IDIITRVLLFSATLTALIVMV) traverse the membrane as a helical segment. Topologically, residues 58–85 (TSDQTEMTQLPGVSSPAPVSAEFNDSPA) are extracellular. A helical transmembrane segment spans residues 86-106 (FIYFVVALVVASFYALISTLV). Residues 107–129 (SISLLLKPEFTAQFSIYLASLDM) lie on the Cytoplasmic side of the membrane. Residues 130 to 150 (VMLGILASATGTAGGVAYIAL) form a helical membrane-spanning segment. Topologically, residues 151-171 (KGNEEVGWNKICNVYDKFCRY) are extracellular. A helical membrane pass occupies residues 172–192 (IATSLALSLFASLLLLVLSIW). At 193–199 (SALSKRT) the chain is on the cytoplasmic side.

The protein belongs to the Casparian strip membrane proteins (CASP) family. As to quaternary structure, homodimer and heterodimers. As to expression, expressed in the root endodermis and flowers.

The protein localises to the cell membrane. The chain is CASP-like protein 1D2 from Arabidopsis thaliana (Mouse-ear cress).